Consider the following 32-residue polypeptide: Beta-1,4-galactosyltransferase 1 (32 aa).

Belongs to the glycosyltransferase 7 family. Mn(2+) is required as a cofactor. In terms of processing, the soluble form derives from the membrane form by proteolytic processing.

The protein resides in the golgi apparatus. It is found in the golgi stack membrane. The protein localises to the secreted. Its subcellular location is the cell membrane. It localises to the cell projection. The protein resides in the filopodium. The catalysed reaction is D-glucose + UDP-alpha-D-galactose = lactose + UDP + H(+). It carries out the reaction an N-acetyl-beta-D-glucosaminyl derivative + UDP-alpha-D-galactose = a beta-D-galactosyl-(1-&gt;4)-N-acetyl-beta-D-glucosaminyl derivative + UDP + H(+). The enzyme catalyses N-acetyl-D-glucosamine + UDP-alpha-D-galactose = beta-D-galactosyl-(1-&gt;4)-N-acetyl-D-glucosamine + UDP + H(+). It catalyses the reaction a beta-D-GlcNAc-(1-&gt;3)-beta-D-Gal-(1-&gt;4)-beta-D-Glc-(1&lt;-&gt;1)-Cer(d18:1(4E)) + UDP-alpha-D-galactose = a neolactoside nLc4Cer(d18:1(4E)) + UDP + H(+). The catalysed reaction is a beta-D-glucosylceramide + UDP-alpha-D-galactose = a beta-D-galactosyl-(1-&gt;4)-beta-D-glucosyl-(1&lt;-&gt;1)-ceramide + UDP + H(+). It carries out the reaction a neolactoside IV(3)-beta-GlcNAc-nLc4Cer + UDP-alpha-D-galactose = a neolactoside nLc6Cer + UDP + H(+). It functions in the pathway protein modification; protein glycosylation. Its function is as follows. This protein is responsible for the synthesis of complex-type N-linked oligosaccharides in many glycoproteins as well as the carbohydrate moieties of glycolipids. The polypeptide is Beta-1,4-galactosyltransferase 1 (Rattus norvegicus (Rat)).